Reading from the N-terminus, the 227-residue chain is UPF0173 metal-dependent hydrolase Tlet_1100 (227 aa).

It belongs to the UPF0173 family.

The protein is UPF0173 metal-dependent hydrolase Tlet_1100 of Pseudothermotoga lettingae (strain ATCC BAA-301 / DSM 14385 / NBRC 107922 / TMO) (Thermotoga lettingae).